Consider the following 350-residue polypeptide: Uroporphyrinogen decarboxylase (350 aa).

Residues 27–31, Phe46, Asp76, Tyr152, Ser207, and His321 contribute to the substrate site; that span reads RQAGR.

It belongs to the uroporphyrinogen decarboxylase family. Homodimer.

It is found in the cytoplasm. The enzyme catalyses uroporphyrinogen III + 4 H(+) = coproporphyrinogen III + 4 CO2. It functions in the pathway porphyrin-containing compound metabolism; protoporphyrin-IX biosynthesis; coproporphyrinogen-III from 5-aminolevulinate: step 4/4. In terms of biological role, catalyzes the decarboxylation of four acetate groups of uroporphyrinogen-III to yield coproporphyrinogen-III. The sequence is that of Uroporphyrinogen decarboxylase from Listeria monocytogenes serotype 4a (strain HCC23).